A 426-amino-acid chain; its full sequence is Histidine--tRNA ligase (426 aa).

Belongs to the class-II aminoacyl-tRNA synthetase family. In terms of assembly, homodimer.

The protein resides in the cytoplasm. The enzyme catalyses tRNA(His) + L-histidine + ATP = L-histidyl-tRNA(His) + AMP + diphosphate + H(+). This chain is Histidine--tRNA ligase, found in Colwellia psychrerythraea (strain 34H / ATCC BAA-681) (Vibrio psychroerythus).